Consider the following 524-residue polypeptide: MSNRSFKNFIEEELGTFPQFLIYALLEWILIIILFIDGFLAFFSNQIAKFFDLKIPCLLCTRLDHVLVSRNPDFYYNDSICDAHKKNVSSLAYCHVHKKLSEIKRMCEGCLLSFATEKETDVDTYKSLIGILHKDLELLIDDERELQLAFPVAGSKKDENFYQVENRTNNSNDRFQRQQRCSCCGQIMKLKSDKPKSNNQSFFGAPSPSPRVSFNQRTLDLSNIKYTDLPEDDDALNTKGASLDAVDDRTPSFVKGGNKFFGIPLSDSAQNSPRWSVRSMKKSFVDQNGLESEVLDGDSILQHLNRQVRLDRKSLMDLYMELDEERSASAVAANNAMAMITRLQAEKAAVQMEALQYQRMMDEQAEYDQEALQSMNGLLVKREEEMKELEAGIEVYRLRYGLLREERGEAEEFLDEETKPVSDLPVCSSNHEEDLEQMKDSAEDSIGNNGVMIIEEEKENGSRKDMLVKEISEITERLNAIESKGELLQQISDVLDVSEGEAILLQISQNLHMLRSFIEMPTES.

Residues 20–40 (FLIYALLEWILIIILFIDGFL) traverse the membrane as a helical segment. The region spanning 299-397 (SILQHLNRQV…ELEAGIEVYR (99 aa)) is the GTD-binding domain. Positions 462–490 (SRKDMLVKEISEITERLNAIESKGELLQQ) form a coiled coil.

Its subcellular location is the membrane. Functionally, probable membrane-anchored myosin receptors. The protein is Probable myosin-binding protein 5 of Arabidopsis thaliana (Mouse-ear cress).